A 466-amino-acid polypeptide reads, in one-letter code: Acetylornithine aminotransferase, mitochondrial (466 aa).

N6-(pyridoxal phosphate)lysine is present on Lys308.

Belongs to the class-III pyridoxal-phosphate-dependent aminotransferase family. The cofactor is pyridoxal 5'-phosphate.

The protein resides in the mitochondrion matrix. It catalyses the reaction N(2)-acetyl-L-ornithine + 2-oxoglutarate = N-acetyl-L-glutamate 5-semialdehyde + L-glutamate. Its pathway is amino-acid biosynthesis; L-arginine biosynthesis; N(2)-acetyl-L-ornithine from L-glutamate: step 4/4. The polypeptide is Acetylornithine aminotransferase, mitochondrial (ARG8) (Debaryomyces hansenii (strain ATCC 36239 / CBS 767 / BCRC 21394 / JCM 1990 / NBRC 0083 / IGC 2968) (Yeast)).